The sequence spans 387 residues: O-methyltransferase lepI (387 aa).

135-148 (FENLWPVLMALPDF) lines the substrate pocket. The segment at 175-195 (CFHWLATQPTRIANFKVLLTD) is substrate binding. Residues 227 to 228 (GG), D252, 275 to 276 (NF), and R291 each bind S-adenosyl-L-methionine.

Belongs to the class I-like SAM-binding methyltransferase superfamily. Cation-independent O-methyltransferase family.

In terms of biological role, O-methyltransferase; part of the gene cluster 23 that mediates the biosynthesis of a family of 2-pyridones known as leporins. The hybrid PKS-NRPS synthetase lepA and the enoyl reductase lepG are responsible for fusion of phenylalanine with a hexaketide and subsequent release of the stable tetramic acid precursor, pre-leporin C. Because lepA lacks a designated enoylreductase (ER) domain, the required activity is provided the enoyl reductase lepG. It is possible that the dehydrogenase lepF also participates in production of pre-leporin C. Cytochrome P450 monooxygenase lepH is then required for the ring expansion step to yield leporin C. Leporin C is then presumably further oxidized by the N-hydroxylase lepD to form leporin B. LepI may possess a function in biosynthesis upstream of lepA. Leporin B is further oxidized in the presence of ferric ion to give the leporin B trimer-iron chelate, but whether or not this reaction is catalyzed by an enzyme in the pathway or by ferric ion is not determined yet. In Aspergillus flavus (strain ATCC 200026 / FGSC A1120 / IAM 13836 / NRRL 3357 / JCM 12722 / SRRC 167), this protein is O-methyltransferase lepI.